Reading from the N-terminus, the 569-residue chain is Urease subunit beta (569 aa).

Positions 131-569 (GGIDTHIHFI…VSLAQLFSIF (439 aa)) constitute a Urease domain. Ni(2+) is bound by residues His-136, His-138, and Lys-219. Position 219 is an N6-carboxylysine (Lys-219). Residue His-221 coordinates substrate. 2 residues coordinate Ni(2+): His-248 and His-274. His-322 functions as the Proton donor in the catalytic mechanism. A Ni(2+)-binding site is contributed by Asp-362.

This sequence belongs to the metallo-dependent hydrolases superfamily. Urease alpha subunit family. Heterohexamer of 3 UreA (alpha) and 3 UreB (beta) subunits. The cofactor is Ni cation. In terms of processing, carboxylation allows a single lysine to coordinate two nickel ions.

It is found in the cytoplasm. It catalyses the reaction urea + 2 H2O + H(+) = hydrogencarbonate + 2 NH4(+). It participates in nitrogen metabolism; urea degradation; CO(2) and NH(3) from urea (urease route): step 1/1. This is Urease subunit beta from Helicobacter pylori (strain P12).